Consider the following 512-residue polypeptide: Chromatin assembly factor 1 subunit B (512 aa).

4 WD repeats span residues 16 to 56 (DDHT…SSTK), 65 to 105 (RHTQ…TTLA), 126 to 165 (SMGS…LLTQ), and 168 to 207 (DHSH…KNPK). Positions 239–257 (DESSGISEPIETSNNNESP) are enriched in polar residues. Positions 239–261 (DESSGISEPIETSNNNESPVSKH) are disordered. 2 WD repeats span residues 373–413 (SFSN…PFYR) and 417–458 (LHYS…VKSQ). The disordered stretch occupies residues 459 to 512 (HKISLPEKRSASPSSIDDSQDNTAGGPATTTLIPRKVESSKVSKKRIAPTPVYP). 3 positions are modified to phosphoserine: S468, S470, and S473. Positions 469–490 (ASPSSIDDSQDNTAGGPATTTL) are enriched in polar residues.

The protein belongs to the WD repeat HIR1 family. As to quaternary structure, component of chromatin assembly factor 1 (CAF-1), composed of pcf1, pcf2 and pcf3. Interacts with pcn1/PCNA during S-phase. Interacts with swi6 at the G1/S-phase transition and early S-phase, but not in the G2 phase. The CAF-1 complex interacts with histone H3-H4 dimers.

Its subcellular location is the cytoplasm. It is found in the nucleus. Its function is as follows. Acts as a component of the histone chaperone complex chromatin assembly factor 1 (CAF-1), which assembles histone octamers onto DNA during replication and repair. CAF-1 performs the first step of the nucleosome assembly process, bringing newly synthesized histones H3 and H4 to replicating DNA; histones H2A/H2B can bind to this chromatin precursor subsequent to DNA replication to complete the histone octamer. Plays a role in the maintenance of heterochromatin. This chain is Chromatin assembly factor 1 subunit B, found in Schizosaccharomyces pombe (strain 972 / ATCC 24843) (Fission yeast).